A 44-amino-acid polypeptide reads, in one-letter code: uncharacterized protein (44 aa).

The helical transmembrane segment at S6–V26 threads the bilayer.

The protein localises to the membrane. This is an uncharacterized protein from Ornithodoros (relapsing fever ticks).